We begin with the raw amino-acid sequence, 83 residues long: NADH dehydrogenase [ubiquinone] iron-sulfur protein 5-B (83 aa).

In terms of domain architecture, CHCH spans 11-52 (KGRCYDFWMDFSECMSHCREPKDCTLLREDYLECLHHSKEFQ). 2 short sequence motifs (cx9C motif) span residues 14–24 (CYDFWMDFSEC) and 34–44 (CTLLREDYLEC). 2 disulfide bridges follow: Cys-14–Cys-44 and Cys-24–Cys-34. The disordered stretch occupies residues 62 to 83 (QRKLRAASRKGEETGDGTHTHH).

It belongs to the complex I NDUFS5 subunit family. Complex I is composed of at least 49 different subunits. This is a component of the iron-sulfur (IP) fragment of the enzyme.

It localises to the mitochondrion. The protein localises to the mitochondrion inner membrane. It is found in the mitochondrion intermembrane space. In terms of biological role, accessory subunit of the mitochondrial membrane respiratory chain NADH dehydrogenase (Complex I), that is believed not to be involved in catalysis. Complex I functions in the transfer of electrons from NADH to the respiratory chain. The immediate electron acceptor for the enzyme is believed to be ubiquinone. This Arabidopsis thaliana (Mouse-ear cress) protein is NADH dehydrogenase [ubiquinone] iron-sulfur protein 5-B.